The sequence spans 148 residues: UPF0260 protein YcgN (148 aa).

The protein belongs to the UPF0260 family.

The polypeptide is UPF0260 protein YcgN (Salmonella paratyphi A (strain AKU_12601)).